The primary structure comprises 335 residues: MSLDINQIALHQLIKRDEQNLELVLRDSLLEPTTTVVEMVAELHRVYSAKNKAYGLFNEESELAQALRLQRQGEEDFLAFSRAATGRLRDELAKYPFADGGIVLFCHYRYLAVEYLLVTVLNNLSSMRVNENLDINPTHYLDINHADIVARIDLTEWETNPQSTRYLTFLKGRVGRKVADFFMDFLGASEGLNAKAQNRGLLQAVDDFTAEAQLDKAERQNVRQQVYSYCNEQLQAGEEIELESLSKELSGVSEVSFSEFTAEKGYELEESFPADRSTLRQLTKYAGSGGGLTINFDAMLLGERIFWDPATDTLTIKGTPPNLREQLQRRTSGEK.

This sequence belongs to the YejK family.

Its subcellular location is the cytoplasm. The protein localises to the nucleoid. The chain is Nucleoid-associated protein YejK from Salmonella enteritidis PT4 (strain P125109).